The chain runs to 467 residues: Chromosomal replication initiator protein DnaA (467 aa).

The tract at residues 1–85 (MSLSLWQQCL…FEVGAKPASS (85 aa)) is domain I, interacts with DnaA modulators. Residues 85–130 (SLQKGAVSPAAAAIPAAQVQTARVAPTIVRPGWDNVPAPAEPTYRS) form a domain II region. The tract at residues 131–347 (NVNVKHTFDN…GALNRVIANA (217 aa)) is domain III, AAA+ region. ATP contacts are provided by G175, G177, K178, and T179. The interval 348–467 (NFTGRAITID…FSNLIRTLSS (120 aa)) is domain IV, binds dsDNA.

This sequence belongs to the DnaA family. Oligomerizes as a right-handed, spiral filament on DNA at oriC.

It localises to the cytoplasm. Functionally, plays an essential role in the initiation and regulation of chromosomal replication. ATP-DnaA binds to the origin of replication (oriC) to initiate formation of the DNA replication initiation complex once per cell cycle. Binds the DnaA box (a 9 base pair repeat at the origin) and separates the double-stranded (ds)DNA. Forms a right-handed helical filament on oriC DNA; dsDNA binds to the exterior of the filament while single-stranded (ss)DNA is stabiized in the filament's interior. The ATP-DnaA-oriC complex binds and stabilizes one strand of the AT-rich DNA unwinding element (DUE), permitting loading of DNA polymerase. After initiation quickly degrades to an ADP-DnaA complex that is not apt for DNA replication. Binds acidic phospholipids. The chain is Chromosomal replication initiator protein DnaA from Klebsiella pneumoniae (strain 342).